We begin with the raw amino-acid sequence, 329 residues long: Dolichyl-diphosphooligosaccharide--protein glycosyltransferase subunit MAGT1 (329 aa).

The signal sequence occupies residues 1-23 (MAGLKGLLFGGILFAMCGGLSEG). The Extracellular portion of the chain corresponds to 24–178 (QKKKEMVLSD…DVNIRVIRPP (155 aa)). The 129-residue stretch at 41 to 169 (WASKRPVIRM…LARWVADRTD (129 aa)) folds into the Thioredoxin domain. An N-linked (GlcNAc...) asparagine glycan is attached at Asn-65. Cys-81 and Cys-84 are oxidised to a cystine. Residues 179–199 (NYAGPLMLGLLLAVIGGLVYL) traverse the membrane as a helical segment. The Cytoplasmic portion of the chain corresponds to 200-212 (RRSNLDFLNNKTG). Residues 213–233 (WALAALCFVLAMTSGQMWNHI) form a helical membrane-spanning segment. Over 234 to 258 (RGPPYAHKNPHTNQVNYIHGSSQAQ) the chain is Extracellular. A helical membrane pass occupies residues 259–279 (FVAETHIVLLFNGAVTLGMVL). Residues 280–294 (LHEAATSDLDVGKRK) are Cytoplasmic-facing. The helical transmembrane segment at 295–315 (IMCIAGITLVVIFFSWLLSVF) threads the bilayer. The Extracellular portion of the chain corresponds to 316 to 329 (RSKYHGYPYSFLMT).

The protein belongs to the OST3/OST6 family. In terms of assembly, accessory component of the STT3B-containing form of the oligosaccharyltransferase (OST) complex.

The protein resides in the cell membrane. It is found in the endoplasmic reticulum. The protein localises to the endoplasmic reticulum membrane. It functions in the pathway protein modification; protein glycosylation. Functionally, accessory component of the STT3B-containing form of the N-oligosaccharyl transferase (OST) complex which catalyzes the transfer of a high mannose oligosaccharide from a lipid-linked oligosaccharide donor to an asparagine residue within an Asn-X-Ser/Thr consensus motif in nascent polypeptide chains. May be involved in substrate-specific N-glycosylation involving acceptor sites that are near cysteine residues. Could indirectly play a role in Mg(2+) transport in epithelial cells. In Xenopus laevis (African clawed frog), this protein is Dolichyl-diphosphooligosaccharide--protein glycosyltransferase subunit MAGT1.